Reading from the N-terminus, the 398-residue chain is Peptidyl-prolyl cis-trans isomerase D (398 aa).

The PPIase cyclophilin-type domain occupies 21 to 185 (FGSSPASRPG…EDVKIVDCGE (165 aa)). 3 TPR repeats span residues 229–262 (GLAL…LQLH), 282–323 (TSIQ…PSTE), and 335–368 (AKAF…APED).

This sequence belongs to the cyclophilin-type PPIase family. PPIase D subfamily.

It localises to the cytoplasm. The enzyme catalyses [protein]-peptidylproline (omega=180) = [protein]-peptidylproline (omega=0). PPIases accelerate the folding of proteins. It catalyzes the cis-trans isomerization of proline imidic peptide bonds in oligopeptides. This Mycosarcoma maydis (Corn smut fungus) protein is Peptidyl-prolyl cis-trans isomerase D (CPR6).